The chain runs to 492 residues: Aspartyl/glutamyl-tRNA(Asn/Gln) amidotransferase subunit B (492 aa).

The protein belongs to the GatB/GatE family. GatB subfamily. As to quaternary structure, heterotrimer of A, B and C subunits.

It carries out the reaction L-glutamyl-tRNA(Gln) + L-glutamine + ATP + H2O = L-glutaminyl-tRNA(Gln) + L-glutamate + ADP + phosphate + H(+). It catalyses the reaction L-aspartyl-tRNA(Asn) + L-glutamine + ATP + H2O = L-asparaginyl-tRNA(Asn) + L-glutamate + ADP + phosphate + 2 H(+). Allows the formation of correctly charged Asn-tRNA(Asn) or Gln-tRNA(Gln) through the transamidation of misacylated Asp-tRNA(Asn) or Glu-tRNA(Gln) in organisms which lack either or both of asparaginyl-tRNA or glutaminyl-tRNA synthetases. The reaction takes place in the presence of glutamine and ATP through an activated phospho-Asp-tRNA(Asn) or phospho-Glu-tRNA(Gln). This Prochlorococcus marinus (strain SARG / CCMP1375 / SS120) protein is Aspartyl/glutamyl-tRNA(Asn/Gln) amidotransferase subunit B.